A 244-amino-acid chain; its full sequence is Gas vesicle protein F (244 aa).

This sequence belongs to the gas vesicle GvpF/GvpL family. In terms of assembly, binds GvpA.

The protein localises to the gas vesicle. Functionally, a minor component of the gas vesicle, may be involved in preventing GvpA aggregation during gas vesicle nucleation. Gas vesicles (GV) are hollow, gas filled proteinaceous nanostructures. During planktonic growth they allow positioning of the organism at a favorable depth for light or nutrient acquisition. In terms of biological role, cluster expression in E.coli (gvpA1-gvpA2-gvpC-gvpN-gvpJ-gvpK-gvpF-gvpG-gvpV-gvpW) allows cells to float and produces irregularly shaped gas vesicles. This Nostoc sp. (strain PCC 7120 / SAG 25.82 / UTEX 2576) protein is Gas vesicle protein F.